The chain runs to 37 residues: MKVRPSVKKMCEKCKIIKRKGRVMVICENPKHKQKQG.

Belongs to the bacterial ribosomal protein bL36 family.

This Caldanaerobacter subterraneus subsp. tengcongensis (strain DSM 15242 / JCM 11007 / NBRC 100824 / MB4) (Thermoanaerobacter tengcongensis) protein is Large ribosomal subunit protein bL36.